A 315-amino-acid chain; its full sequence is D-alanine--D-alanine ligase B (315 aa).

Residues 109-309 (KKVAAAAGVV…FAELLSWMVE (201 aa)) enclose the ATP-grasp domain. Residue 135 to 190 (PMKPPYVVKPVREGSSFGVVIVKEDQPHPPQVIGSADWKYGDEVMVEGYIAGRELT) coordinates ATP. Residues D259, E276, and N278 each coordinate Mg(2+).

Belongs to the D-alanine--D-alanine ligase family. Mg(2+) serves as cofactor. The cofactor is Mn(2+).

It is found in the cytoplasm. It catalyses the reaction 2 D-alanine + ATP = D-alanyl-D-alanine + ADP + phosphate + H(+). It participates in cell wall biogenesis; peptidoglycan biosynthesis. Functionally, cell wall formation. This is D-alanine--D-alanine ligase B from Brucella melitensis biotype 1 (strain ATCC 23456 / CCUG 17765 / NCTC 10094 / 16M).